A 527-amino-acid chain; its full sequence is PTS system maltose-specific EIICB component (527 aa).

The 418-residue stretch at 1–418 (MMQKIQRFGS…FNIATPGREK (418 aa)) folds into the PTS EIIC type-1 domain. Helical transmembrane passes span 8-28 (FGSA…IVGI), 59-79 (GWTV…VALA), 93-113 (VYLT…GAFG), 132-152 (IKTL…VVFL), 173-193 (YIVM…SYIW), 200-220 (IGSL…IYTF), 224-244 (ILIP…GPAV), 276-296 (FALH…AFYV), 305-325 (LVAG…ITEP), 326-346 (IEFT…VLAA), 357-377 (VVGN…IPLF), and 382-402 (MTYV…FFVF). The 79-residue stretch at 449–527 (DDTAFLYIEA…RERVEKILNQ (79 aa)) folds into the PTS EIIB type-1 domain. Cysteine 471 serves as the catalytic Phosphocysteine intermediate; for EIIB activity.

It is found in the cell membrane. It catalyses the reaction D-maltose(out) + N(pros)-phospho-L-histidyl-[protein] = alpha-maltose 6'-phosphate(in) + L-histidyl-[protein]. In terms of biological role, the phosphoenolpyruvate-dependent sugar phosphotransferase system (sugar PTS), a major carbohydrate active transport system, catalyzes the phosphorylation of incoming sugar substrates concomitantly with their translocation across the cell membrane. This system is involved in maltose transport. The sequence is that of PTS system maltose-specific EIICB component from Bacillus subtilis (strain 168).